The following is a 1121-amino-acid chain: Solute carrier family 38 member 10 (1121 aa).

The next 10 membrane-spanning stretches (helical) occupy residues 4–24 (AAASNWGLITNIVNSIVGVSV), 36–58 (IVLGALLLVFCSWMTHQSCMFLV), 84–104 (LVETSMIGLMLGTCIAFYVVI), 120–140 (VGGTFRMFLLFAVSLCIVLPL), 153–173 (FSAMALLFYTVFMFVIVLSSL), 229–249 (IFASSLNVVTTFYVMVGFFGY), 272–292 (MLRVGFMMSVAVGFPMMILPC), 323–343 (ALTLSVVFGTMVGGILIPNVE), 345–365 (ILGLTGATMGSLICFICPALI), and 378–398 (VVLWVGLGILVVSTVTTLSVS). 3 disordered regions span residues 434-691 (VVAV…EEAG), 731-904 (KEIH…AATG), and 965-1068 (ISDG…ELAP). Composition is skewed to basic and acidic residues over residues 439 to 454 (EDGREKPKLPKEREEL), 466 to 475 (PGREDGKEAQ), 493 to 508 (EAHRHEPPVPHDKVVV), and 544 to 559 (DSEREKREPEQGEVGK). A Phosphoserine modification is found at S612. Composition is skewed to basic and acidic residues over residues 645–659 (DSDHGGKPPLPEEKP), 668–679 (EPREQRDVERAG), 731–752 (KEIHQQRQEDEEDKPRQVEVHP), 763–773 (EAPEGKARETM), 802–811 (SLEHPERPVG), and 863–876 (PAREAGGPEERLAE). A Phosphothreonine modification is found at T772. The residue at position 802 (S802) is a Phosphoserine. Phosphoserine occurs at positions 890 and 966. Basic and acidic residues predominate over residues 976 to 998 (HRLDHGGYLEMRKEARGGDHMPV). Phosphoserine is present on S999. Basic and acidic residues-rich tracts occupy residues 1035–1044 (DNAKPNRDLK) and 1057–1068 (DLGPHAEGELAP).

Belongs to the amino acid/polyamine transporter 2 family.

Its subcellular location is the membrane. It carries out the reaction L-glutamate(out) = L-glutamate(in). The catalysed reaction is L-glutamine(out) = L-glutamine(in). The enzyme catalyses L-alanine(in) = L-alanine(out). It catalyses the reaction L-serine(in) = L-serine(out). It carries out the reaction L-leucine(in) = L-leucine(out). In terms of biological role, facilitates bidirectional transport of amino acids. May act as a glutamate sensor that regulates glutamate-glutamine cycle and mTOR signaling in the brain. The transport mechanism remains to be elucidated. The protein is Solute carrier family 38 member 10 of Pongo abelii (Sumatran orangutan).